Here is a 379-residue protein sequence, read N- to C-terminus: Fimbrium subunit Fim1C (379 aa).

The first 17 residues, 1–17 (MEVKSLLMVMATLTIAG), serve as a signal peptide directing secretion. C18 is lipidated: N-palmitoyl cysteine. Residue C18 is the site of S-diacylglycerol cysteine attachment. Positions 18 to 45 (CSQNEMTEMNPDTNRTIGLDVYTEVQTR) are excised as a propeptide.

The protein belongs to the bacteroidetes fimbrillin superfamily. Mfa-like family. As to quaternary structure, may be part of the fimbrial tip.

The protein localises to the fimbrium. The protein resides in the cell outer membrane. In terms of biological role, probably a component of the fimbrium tip. Fimbriae are filamentous appendages on the cell surface that mediate cell adhesion and biofilm formation. The polypeptide is Fimbrium subunit Fim1C (fim1C) (Phocaeicola vulgatus (strain ATCC 8482 / DSM 1447 / JCM 5826 / CCUG 4940 / NBRC 14291 / NCTC 11154) (Bacteroides vulgatus)).